Reading from the N-terminus, the 172-residue chain is S-ribosylhomocysteine lyase (172 aa).

Fe cation is bound by residues His-54, His-58, and Cys-128.

Belongs to the LuxS family. Homodimer. Requires Fe cation as cofactor.

It carries out the reaction S-(5-deoxy-D-ribos-5-yl)-L-homocysteine = (S)-4,5-dihydroxypentane-2,3-dione + L-homocysteine. Its function is as follows. Involved in the synthesis of autoinducer 2 (AI-2) which is secreted by bacteria and is used to communicate both the cell density and the metabolic potential of the environment. The regulation of gene expression in response to changes in cell density is called quorum sensing. Catalyzes the transformation of S-ribosylhomocysteine (RHC) to homocysteine (HC) and 4,5-dihydroxy-2,3-pentadione (DPD). The sequence is that of S-ribosylhomocysteine lyase from Aliivibrio fischeri (strain MJ11) (Vibrio fischeri).